The chain runs to 240 residues: Serine protease SplB (240 aa).

Residues 1 to 36 form the signal peptide; sequence MNKNVVIKSLAALTILTSVTGIGTTLVEEVQQTAKA. Active-site charge relay system residues include His75, Asp113, and Ser193.

Belongs to the peptidase S1B family.

It is found in the secreted. Its function is as follows. Serine protease that cleaves specifically after the sequence Trp-Glu-Leu-Gln. This is Serine protease SplB (splB) from Staphylococcus aureus (strain USA300).